A 61-amino-acid polypeptide reads, in one-letter code: Temporin-ALi (61 aa).

A signal peptide spans 1–22; the sequence is MFPLKKSLLLLFFLATINLSLC. Residues 23-46 constitute a propeptide that is removed on maturation; that stretch reads EQERNAEEERRDEPDERNAEVEKR. Leu59 is subject to Leucine amide.

Belongs to the frog skin active peptide (FSAP) family. Temporin subfamily. In terms of tissue distribution, expressed by the skin glands.

Its subcellular location is the secreted. Its function is as follows. Antimicrobial peptide with activity against Gram-positive and Gram-negative bacteria and against fungi. Has been tested against S.aureus (MIC=7.5 ug/mL), B.pumilus (MIC=7.5 ug/mL), B.cereus (MIC=75.0 ug/mL), E.coli (MIC=7.5 ug/mL), B.dysenteriae (MIC=20.0 ug/mL), A.cacoaceticus (MIC=60.0 ug/mL), P.aeruginosa (MIC=5.0 ug/mL) and C.albicans (MIC=5.0 ug/mL). Also shows a weak hemolytic activity. This Amolops loloensis (Lolokou Sucker Frog) protein is Temporin-ALi.